The sequence spans 96 residues: MTVARLTDAERDALLAELPEWALREDGLAIVRTFRFADFSQAWGFMNRVALHAEKTDHHPEWFNVYNRVEVTLTTHDADGLSARDADMARAMESFL.

The protein belongs to the pterin-4-alpha-carbinolamine dehydratase family.

The enzyme catalyses (4aS,6R)-4a-hydroxy-L-erythro-5,6,7,8-tetrahydrobiopterin = (6R)-L-erythro-6,7-dihydrobiopterin + H2O. The polypeptide is Putative pterin-4-alpha-carbinolamine dehydratase (Novosphingobium aromaticivorans (strain ATCC 700278 / DSM 12444 / CCUG 56034 / CIP 105152 / NBRC 16084 / F199)).